The primary structure comprises 442 residues: Cytochrome c biogenesis protein CcsB (442 aa).

Helical transmembrane passes span 17 to 37, 76 to 96, and 162 to 182; these read LRLA…GTVI, TPWY…CTLT, and LGPI…ILGA.

It belongs to the Ccs1/CcsB family. May interact with CcsA.

The protein localises to the cellular thylakoid membrane. In terms of biological role, required during biogenesis of c-type cytochromes (cytochrome c6 and cytochrome f) at the step of heme attachment. The chain is Cytochrome c biogenesis protein CcsB from Thermosynechococcus vestitus (strain NIES-2133 / IAM M-273 / BP-1).